The chain runs to 77 residues: DNA-directed RNA polymerase subunit epsilon (77 aa).

This sequence belongs to the RNA polymerase subunit epsilon family. In terms of assembly, RNAP is composed of a core of 2 alpha, a beta and a beta' subunit. The core is associated with a delta subunit, and at least one of epsilon or omega. When a sigma factor is associated with the core the holoenzyme is formed, which can initiate transcription.

It carries out the reaction RNA(n) + a ribonucleoside 5'-triphosphate = RNA(n+1) + diphosphate. Functionally, a non-essential component of RNA polymerase (RNAP). This Streptococcus pneumoniae serotype 2 (strain D39 / NCTC 7466) protein is DNA-directed RNA polymerase subunit epsilon.